The primary structure comprises 372 residues: F-box/kelch-repeat protein At4g14905 (372 aa).

Residues L34–R74 enclose the F-box domain. Kelch repeat units lie at residues E137–G183, K184–M229, and K232–Q280.

The polypeptide is F-box/kelch-repeat protein At4g14905 (Arabidopsis thaliana (Mouse-ear cress)).